The chain runs to 429 residues: Cytochrome bc1 complex Rieske iron-sulfur subunit (429 aa).

The interval 1-45 (MSRADDDAVGVPPTCGGRSDEEERRIVPGPNPQDGAKDGAKATAV) is disordered. Transmembrane regions (helical) follow at residues 96–116 (VAVW…IFLF), 137–157 (PLYG…AVLY), and 207–227 (FGVG…GGLI). A Rieske domain is found at 316 to 410 (RNPVMLIRIK…ITIDTDGYLV (95 aa)). [2Fe-2S] cluster is bound by residues C353, H355, C372, and H375. C358 and C374 are joined by a disulfide.

The protein belongs to the Rieske iron-sulfur protein family. The cytochrome bc1 complex is composed of a cytochrome b (QcrB), the Rieske iron-sulfur protein (QcrA) and a diheme cytochrome c (QcrC) subunit. [2Fe-2S] cluster is required as a cofactor.

It is found in the cell membrane. Its function is as follows. Iron-sulfur subunit of the cytochrome bc1 complex, an essential component of the respiratory electron transport chain required for ATP synthesis. The bc1 complex catalyzes the oxidation of menaquinol and the reduction of cytochrome c in the respiratory chain. The bc1 complex operates through a Q-cycle mechanism that couples electron transfer to generation of the proton gradient that drives ATP synthesis. The chain is Cytochrome bc1 complex Rieske iron-sulfur subunit (qcrA) from Mycobacterium bovis (strain ATCC BAA-935 / AF2122/97).